The sequence spans 101 residues: Urease subunit beta (101 aa).

It belongs to the urease beta subunit family. As to quaternary structure, heterotrimer of UreA (gamma), UreB (beta) and UreC (alpha) subunits. Three heterotrimers associate to form the active enzyme.

It localises to the cytoplasm. The enzyme catalyses urea + 2 H2O + H(+) = hydrogencarbonate + 2 NH4(+). Its pathway is nitrogen metabolism; urea degradation; CO(2) and NH(3) from urea (urease route): step 1/1. The protein is Urease subunit beta of Dechloromonas aromatica (strain RCB).